Here is a 73-residue protein sequence, read N- to C-terminus: Putative antimicrobial peptide clone 4 (73 aa).

The signal sequence occupies residues 1–22 (MQMKYLIPIFFLVLIVADHCHA). Residues 45–73 (DITSQIEQYRNLQKREAELEDILANLPVY) constitute a propeptide that is removed on maturation.

Belongs to the non-disulfide-bridged peptide (NDBP) superfamily. Short antimicrobial peptide (group 4) family. In terms of tissue distribution, expressed by the venom gland.

It localises to the secreted. In terms of biological role, antimicrobial peptide. Has a high antibacterial activity against the Gram-positive bacterium S.aureus (MIC=5-17.30 uM), the methicillin-resistant S.aureus (MRSA) (MIC=17.30 uM), and E.faecalis (MIC=69.23 uM). Has antifungal activity against Candida spp. and one Cryptococcus neoformans strains with MICs values ranging from 6.25 to 100 uM. Also shows an inhibitory activity on C.albicans biofilms at high concentrations. Has a moderate hemolytic potency (18% at 20 uM). Also inhibits the growth of the five cancer cell lines tested. In the model of polymicrobial sepsis, it exhibits an antibiotic effect, reducing the levels of microorganisms in the infectious focus and the inflammatory responses in the lung and cecum of septic animals. This chain is Putative antimicrobial peptide clone 4, found in Tityus costatus (Brazilian scorpion).